The sequence spans 232 residues: Thiamine import ATP-binding protein ThiQ (232 aa).

An ABC transporter domain is found at 2-230 (LKLTDITWLY…KASASALLGI (229 aa)). Position 32–39 (32–39 (GPSGAGKS)) interacts with ATP.

Belongs to the ABC transporter superfamily. Thiamine importer (TC 3.A.1.19.1) family. In terms of assembly, the complex is composed of two ATP-binding proteins (ThiQ), two transmembrane proteins (ThiP) and a solute-binding protein (ThiB).

The protein resides in the cell inner membrane. It carries out the reaction thiamine(out) + ATP + H2O = thiamine(in) + ADP + phosphate + H(+). Part of the ABC transporter complex ThiBPQ involved in thiamine import. Responsible for energy coupling to the transport system. In Escherichia coli (strain K12), this protein is Thiamine import ATP-binding protein ThiQ.